The chain runs to 298 residues: Tyrosine recombinase XerC (298 aa).

A Core-binding (CB) domain is found at 2–88 (TDLHTDVERY…ALRSFFDWLV (87 aa)). The Tyr recombinase domain maps to 109–288 (HLPKNIDVDD…DFQHLASVYD (180 aa)). Active-site residues include R148, K172, H240, R243, and H266. Y275 serves as the catalytic O-(3'-phospho-DNA)-tyrosine intermediate.

This sequence belongs to the 'phage' integrase family. XerC subfamily. In terms of assembly, forms a cyclic heterotetrameric complex composed of two molecules of XerC and two molecules of XerD, in which XerC interacts with XerD via its C-terminal region, XerD interacts with XerC via its C-terminal region and so on.

The protein localises to the cytoplasm. FtsK may regulate the catalytic switch between XerC and XerD in the heterotetrameric complex during the two steps of the recombination process. Site-specific tyrosine recombinase, which acts by catalyzing the cutting and rejoining of the recombining DNA molecules. Binds cooperatively to specific DNA consensus sequences that are separated from XerD binding sites by a short central region, forming the heterotetrameric XerC-XerD complex that recombines DNA substrates. The complex is essential to convert dimers of the bacterial chromosome into monomers to permit their segregation at cell division. It also contributes to the segregational stability of plasmids. In the complex XerC specifically exchanges the top DNA strands. The chain is Tyrosine recombinase XerC from Shigella dysenteriae serotype 1 (strain Sd197).